We begin with the raw amino-acid sequence, 400 residues long: Probable peptidoglycan glycosyltransferase FtsW (400 aa).

The next 11 membrane-spanning stretches (helical) occupy residues 30–50 (LSVL…SIGI), 65–84 (QAAY…RIRL), 92–112 (GLLL…GVGV), 123–143 (LGLF…LYLA), 157–177 (FAGF…LLME), 179–199 (DFGA…LAGA), 201–221 (LWQF…LAIT), 247–267 (TQSL…GASV), 280–300 (FLFA…VVLL), 321–341 (LFGA…AFIN), and 356–376 (LPLM…VGLL).

The protein belongs to the SEDS family. FtsW subfamily.

The protein localises to the cell inner membrane. It catalyses the reaction [GlcNAc-(1-&gt;4)-Mur2Ac(oyl-L-Ala-gamma-D-Glu-L-Lys-D-Ala-D-Ala)](n)-di-trans,octa-cis-undecaprenyl diphosphate + beta-D-GlcNAc-(1-&gt;4)-Mur2Ac(oyl-L-Ala-gamma-D-Glu-L-Lys-D-Ala-D-Ala)-di-trans,octa-cis-undecaprenyl diphosphate = [GlcNAc-(1-&gt;4)-Mur2Ac(oyl-L-Ala-gamma-D-Glu-L-Lys-D-Ala-D-Ala)](n+1)-di-trans,octa-cis-undecaprenyl diphosphate + di-trans,octa-cis-undecaprenyl diphosphate + H(+). It functions in the pathway cell wall biogenesis; peptidoglycan biosynthesis. In terms of biological role, peptidoglycan polymerase that is essential for cell division. In Thioalkalivibrio sulfidiphilus (strain HL-EbGR7), this protein is Probable peptidoglycan glycosyltransferase FtsW.